The following is a 75-amino-acid chain: MKQFNYLSHKDLAVVVGGRNNWQTNVGGAVGSAMIGATVGGTICGPACAVAGAHYLPILWTAVTAATGGFGKIRK.

A propeptide spanning residues Met-1 to Gly-18 is cleaved from the precursor.

This sequence belongs to the bacteriocin class IIB family. As to quaternary structure, this bacteriocin depends upon the complementation of two peptides for activity: LafA and LafX. Associated with a 180 kDa bacteriocin complex.

Functionally, heat stable bacteriocin active against Enterococcus faecalis and other Lactobacilli. This is Bacteriocin lactacin-F subunit LafA (lafA) from Lactobacillus johnsonii (strain CNCM I-12250 / La1 / NCC 533).